A 412-amino-acid chain; its full sequence is 1-deoxy-D-xylulose 5-phosphate reductoisomerase (412 aa).

Positions 10, 11, 12, 13, 36, 37, 38, and 130 each coordinate NADPH. Lys-131 contributes to the 1-deoxy-D-xylulose 5-phosphate binding site. Position 132 (Glu-132) interacts with NADPH. Mn(2+) is bound at residue Asp-156. Ser-157, Glu-158, Ser-194, and His-217 together coordinate 1-deoxy-D-xylulose 5-phosphate. Glu-158 contacts Mn(2+). Gly-223 serves as a coordination point for NADPH. Positions 230, 235, 236, and 239 each coordinate 1-deoxy-D-xylulose 5-phosphate. Residue Glu-239 participates in Mn(2+) binding.

It belongs to the DXR family. The cofactor is Mg(2+). It depends on Mn(2+) as a cofactor.

The enzyme catalyses 2-C-methyl-D-erythritol 4-phosphate + NADP(+) = 1-deoxy-D-xylulose 5-phosphate + NADPH + H(+). It participates in isoprenoid biosynthesis; isopentenyl diphosphate biosynthesis via DXP pathway; isopentenyl diphosphate from 1-deoxy-D-xylulose 5-phosphate: step 1/6. In terms of biological role, catalyzes the NADPH-dependent rearrangement and reduction of 1-deoxy-D-xylulose-5-phosphate (DXP) to 2-C-methyl-D-erythritol 4-phosphate (MEP). In Prochlorococcus marinus (strain NATL2A), this protein is 1-deoxy-D-xylulose 5-phosphate reductoisomerase.